The sequence spans 446 residues: MTVNPAHTALWPAPHASGAVDATVHVPGSKSVTNRALVLAALASEPGWLRRPLRSRDTLLMAAALREMGVGIEETVSSSSSVGGGSDGSGEAWRVIPAALHGPATVDVGNAGTVMRFLPPVAALADGPIRFDGDPRSYERPLNGVIDALRALGARIDDDGRGALPLTVHGGGALDGGPVAIDASSSSQFVSALLLSGPRFNQGVEVRHTGSTLPSMPHIRMTVDMLRAVGAQVDTPESGGEANVWRVTPGALLGRDLTVEPDLSNAQPFLAAALVTGGKVVIPDWPERTTQPGDKLREIFTEMGGSCELTEQGLEFTGSGAVHGIDVDLSEVGELTPGIAAVAALADSPSTLRGVAHLRLHETDRLAALTKEINELGGDVTETADGLSIRPRRLHGGIFHTYDDHRMATAGAIIGLAVDGVQIENVATTAKTLPDFPDLWTGMLGN.

Positions 30, 31, and 35 each coordinate 3-phosphoshikimate. Lysine 30 is a binding site for phosphoenolpyruvate. Phosphoenolpyruvate-binding residues include glycine 112 and arginine 140. 3-phosphoshikimate is bound by residues serine 186, serine 187, glutamine 188, serine 215, glutamate 334, and histidine 361. Phosphoenolpyruvate is bound at residue glutamine 188. Glutamate 334 functions as the Proton acceptor in the catalytic mechanism. Positions 365, 406, and 431 each coordinate phosphoenolpyruvate.

This sequence belongs to the EPSP synthase family. In terms of assembly, monomer.

It is found in the cytoplasm. The enzyme catalyses 3-phosphoshikimate + phosphoenolpyruvate = 5-O-(1-carboxyvinyl)-3-phosphoshikimate + phosphate. It functions in the pathway metabolic intermediate biosynthesis; chorismate biosynthesis; chorismate from D-erythrose 4-phosphate and phosphoenolpyruvate: step 6/7. Its function is as follows. Catalyzes the transfer of the enolpyruvyl moiety of phosphoenolpyruvate (PEP) to the 5-hydroxyl of shikimate-3-phosphate (S3P) to produce enolpyruvyl shikimate-3-phosphate and inorganic phosphate. The polypeptide is 3-phosphoshikimate 1-carboxyvinyltransferase (Streptomyces avermitilis (strain ATCC 31267 / DSM 46492 / JCM 5070 / NBRC 14893 / NCIMB 12804 / NRRL 8165 / MA-4680)).